We begin with the raw amino-acid sequence, 777 residues long: Ribosome-releasing factor 2, mitochondrial (777 aa).

Positions 68-353 constitute a tr-type G domain; that stretch reads AKIRNIGIMA…AITMYLPSPE (286 aa). Residues 77-84, 141-145, and 195-198 contribute to the GTP site; these read AHIDAGKT, DTPGH, and NKMD.

It belongs to the TRAFAC class translation factor GTPase superfamily. Classic translation factor GTPase family. EF-G/EF-2 subfamily.

The protein localises to the mitochondrion. It carries out the reaction GTP + H2O = GDP + phosphate + H(+). Its function is as follows. Mitochondrial GTPase that mediates the disassembly of ribosomes from messenger RNA at the termination of mitochondrial protein biosynthesis. Acts in collaboration with MRRF. GTP hydrolysis follows the ribosome disassembly and probably occurs on the ribosome large subunit. Not involved in the GTP-dependent ribosomal translocation step during translation elongation. This is Ribosome-releasing factor 2, mitochondrial from Bos taurus (Bovine).